Here is a 689-residue protein sequence, read N- to C-terminus: MADLEAVLADVSYLMAMEKSKATPAARASKKILLPEPSIRSVMQKYLEDRGEVTFEKIFSQKLGYLLFRDFCLNYLEEAKPLVEFYEEIKKYEKLETEEERVVRSREIFDSYIMKELLACSHPFSKNATEHVQGHLVKKQVPPDLFQPYIEEICQNLRGDVFQKFIESDKFTRFCQWKNVELNIHLTMNDFSVHRIIGRGGFGEVYGCRKADTGKMYAMKCLDKKRIKMKQGETLALNERIMLSLVSTGDCPFIVCMSYAFRTPDNLSFILDLMNGGDLHYHLSQHGVFSEADMRSYAAEIILGLEHMHNRFVVYRDLKPANILLDEHGHVRISDLGLACDFSKKKPHASVGTHGYMAPEVLQKGVAYDSSADWFSLGCMLFKLLRGHSPFRQHKTKDKHEIDRMTLTMAVELPDSFSPELRSLLEGLLQRDVNRRLGCLGRGAQEVKESPFFRSLDWQMVFLQKYPPPLIPPRGEVNAADAFDIGSFDEEDTKGIKLPDSDQELYRNFPLTISERWQQEVAETVFDTINAETDRLEARKKAKNKQLGHEEDYALGKDCIMHGYMSKMGNPFLTQWQRRYFYLFPNRLEWRGEGEAPQSLLTMEEIQSVEETQIKERKCLLLKIRGGKQFVLQCDSDPELVQWKKELRDAYREAQQLVQRVPKMKNKPRSPVVELSKVPLIQRGSANGL.

An N-terminal region spans residues 1–190; it reads MADLEAVLAD…ELNIHLTMND (190 aa). Residues 54 to 175 form the RGS domain; it reads TFEKIFSQKL…IESDKFTRFC (122 aa). One can recognise a Protein kinase domain in the interval 191-453; the sequence is FSVHRIIGRG…AQEVKESPFF (263 aa). ATP is bound by residues 197–205 and Lys220; that span reads IGRGGFGEV. The Proton acceptor role is filled by Asp317. An AGC-kinase C-terminal domain is found at 454–521; the sequence is RSLDWQMVFL…TISERWQQEV (68 aa). The region spanning 558–652 is the PH domain; that stretch reads DCIMHGYMSK…WKKELRDAYR (95 aa). At Ser670 the chain carries Phosphoserine.

It belongs to the protein kinase superfamily. AGC Ser/Thr protein kinase family. GPRK subfamily. As to quaternary structure, interacts with the heterodimer formed by GNB1 and GNG2. Interacts with GIT1. Interacts with, and phosphorylates chemokine-stimulated CCR5. Interacts with ARRB1. Interacts with LPAR1 and LPAR2. Interacts with RALA in response to LPAR1 activation. ADRBK1 and RALA mutually inhibit each other's binding to LPAR1. Interacts with ADRB2.

It is found in the cytoplasm. The protein resides in the cell membrane. Its subcellular location is the postsynapse. The protein localises to the presynapse. It catalyses the reaction [beta-adrenergic receptor] + ATP = [beta-adrenergic receptor]-phosphate + ADP + H(+). In contrast to other AGC family kinases, the catalytic activity is solely regulated by the binding of substrates and ligands, not by phosphorylation of the kinase domain. Its function is as follows. Specifically phosphorylates the agonist-occupied form of the beta-adrenergic and closely related receptors, probably inducing a desensitization of them. Key regulator of LPAR1 signaling. Competes with RALA for binding to LPAR1 thus affecting the signaling properties of the receptor. Desensitizes LPAR1 and LPAR2 in a phosphorylation-independent manner. Positively regulates ciliary smoothened (SMO)-dependent Hedgehog (Hh) signaling pathway by facilitating the trafficking of SMO into the cilium and the stimulation of SMO activity. Inhibits relaxation of airway smooth muscle in response to blue light. In Mesocricetus auratus (Golden hamster), this protein is Beta-adrenergic receptor kinase 1.